A 193-amino-acid polypeptide reads, in one-letter code: Xanthine phosphoribosyltransferase (193 aa).

The xanthine site is built by Leu20 and Thr27. Position 128 to 132 (128 to 132 (ANGQA)) interacts with 5-phospho-alpha-D-ribose 1-diphosphate. Position 156 (Lys156) interacts with xanthine.

Belongs to the purine/pyrimidine phosphoribosyltransferase family. Xpt subfamily. As to quaternary structure, homodimer.

The protein localises to the cytoplasm. The enzyme catalyses XMP + diphosphate = xanthine + 5-phospho-alpha-D-ribose 1-diphosphate. It participates in purine metabolism; XMP biosynthesis via salvage pathway; XMP from xanthine: step 1/1. Functionally, converts the preformed base xanthine, a product of nucleic acid breakdown, to xanthosine 5'-monophosphate (XMP), so it can be reused for RNA or DNA synthesis. The sequence is that of Xanthine phosphoribosyltransferase from Streptococcus uberis (strain ATCC BAA-854 / 0140J).